A 106-amino-acid chain; its full sequence is Large ribosomal subunit protein uL24 (106 aa).

The protein belongs to the universal ribosomal protein uL24 family. Part of the 50S ribosomal subunit.

One of two assembly initiator proteins, it binds directly to the 5'-end of the 23S rRNA, where it nucleates assembly of the 50S subunit. In terms of biological role, one of the proteins that surrounds the polypeptide exit tunnel on the outside of the subunit. The polypeptide is Large ribosomal subunit protein uL24 (Marinobacter nauticus (strain ATCC 700491 / DSM 11845 / VT8) (Marinobacter aquaeolei)).